Consider the following 532-residue polypeptide: Berberine bridge enzyme-like 18 (532 aa).

The N-terminal stretch at 1 to 29 is a signal peptide; that stretch reads MKFQSFFSSVLIFFTTSTLLLSIPHPVSA. N-linked (GlcNAc...) asparagine glycosylation is found at asparagine 30, asparagine 33, asparagine 46, asparagine 59, asparagine 147, asparagine 169, and asparagine 262. Cysteine 40 and cysteine 102 are disulfide-bonded. In terms of domain architecture, FAD-binding PCMH-type spans 80–254; that stretch reads DVPKPVLILT…LSWKIGLINV (175 aa). Positions 117 to 179 form a cross-link, 6-(S-cysteinyl)-8alpha-(pros-histidyl)-FAD (His-Cys); the sequence is HDYEGLSYVT…RTLAFPAGVC (63 aa).

The protein belongs to the oxygen-dependent FAD-linked oxidoreductase family. FAD is required as a cofactor. In terms of processing, the FAD cofactor is bound via a bicovalent 6-S-cysteinyl, 8alpha-N1-histidyl FAD linkage.

The protein resides in the secreted. It localises to the cell wall. In Arabidopsis thaliana (Mouse-ear cress), this protein is Berberine bridge enzyme-like 18.